Here is a 306-residue protein sequence, read N- to C-terminus: Solute carrier family 25 member 48 (306 aa).

Solcar repeat units follow at residues S3–F86, R101–W200, and P209–A296. Helical transmembrane passes span F9–V29, G61–S81, L107–I127, I184–E204, Y212–M232, and I272–Y290.

This sequence belongs to the mitochondrial carrier (TC 2.A.29) family.

The protein localises to the mitochondrion inner membrane. This chain is Solute carrier family 25 member 48 (Slc25a48), found in Mus musculus (Mouse).